We begin with the raw amino-acid sequence, 161 residues long: 3-hydroxyacyl-[acyl-carrier-protein] dehydratase FabZ (161 aa).

His-66 is a catalytic residue.

The protein belongs to the thioester dehydratase family. FabZ subfamily.

Its subcellular location is the cytoplasm. The enzyme catalyses a (3R)-hydroxyacyl-[ACP] = a (2E)-enoyl-[ACP] + H2O. In terms of biological role, involved in unsaturated fatty acids biosynthesis. Catalyzes the dehydration of short chain beta-hydroxyacyl-ACPs and long chain saturated and unsaturated beta-hydroxyacyl-ACPs. This chain is 3-hydroxyacyl-[acyl-carrier-protein] dehydratase FabZ, found in Gluconacetobacter diazotrophicus (strain ATCC 49037 / DSM 5601 / CCUG 37298 / CIP 103539 / LMG 7603 / PAl5).